Consider the following 400-residue polypeptide: Acetate kinase (400 aa).

Mg(2+) is bound at residue Asn-10. An ATP-binding site is contributed by Lys-17. Residue Arg-91 coordinates substrate. Asp-150 acts as the Proton donor/acceptor in catalysis. ATP-binding positions include 210–214 (HLGNG), 285–287 (DCR), and 333–337 (GIGEN). Glu-387 contributes to the Mg(2+) binding site.

It belongs to the acetokinase family. In terms of assembly, homodimer. It depends on Mg(2+) as a cofactor. Mn(2+) is required as a cofactor.

The protein localises to the cytoplasm. The catalysed reaction is acetate + ATP = acetyl phosphate + ADP. The protein operates within metabolic intermediate biosynthesis; acetyl-CoA biosynthesis; acetyl-CoA from acetate: step 1/2. Its function is as follows. Catalyzes the formation of acetyl phosphate from acetate and ATP. Can also catalyze the reverse reaction. This chain is Acetate kinase, found in Cronobacter sakazakii (strain ATCC BAA-894) (Enterobacter sakazakii).